Reading from the N-terminus, the 458-residue chain is tRNA-2-methylthio-N(6)-dimethylallyladenosine synthase (458 aa).

In terms of domain architecture, MTTase N-terminal spans Gln3 to Cys120. 6 residues coordinate [4Fe-4S] cluster: Cys12, Cys49, Cys83, Cys157, Cys161, and Cys164. Residues Arg143–Lys375 enclose the Radical SAM core domain. The region spanning Ala378–Gly441 is the TRAM domain.

The protein belongs to the methylthiotransferase family. MiaB subfamily. In terms of assembly, monomer. [4Fe-4S] cluster is required as a cofactor.

The protein resides in the cytoplasm. The enzyme catalyses N(6)-dimethylallyladenosine(37) in tRNA + (sulfur carrier)-SH + AH2 + 2 S-adenosyl-L-methionine = 2-methylsulfanyl-N(6)-dimethylallyladenosine(37) in tRNA + (sulfur carrier)-H + 5'-deoxyadenosine + L-methionine + A + S-adenosyl-L-homocysteine + 2 H(+). Catalyzes the methylthiolation of N6-(dimethylallyl)adenosine (i(6)A), leading to the formation of 2-methylthio-N6-(dimethylallyl)adenosine (ms(2)i(6)A) at position 37 in tRNAs that read codons beginning with uridine. This Methylococcus capsulatus (strain ATCC 33009 / NCIMB 11132 / Bath) protein is tRNA-2-methylthio-N(6)-dimethylallyladenosine synthase.